The sequence spans 478 residues: Aspartyl/glutamyl-tRNA(Asn/Gln) amidotransferase subunit B (478 aa).

It belongs to the GatB/GatE family. GatB subfamily. As to quaternary structure, heterotrimer of A, B and C subunits.

The catalysed reaction is L-glutamyl-tRNA(Gln) + L-glutamine + ATP + H2O = L-glutaminyl-tRNA(Gln) + L-glutamate + ADP + phosphate + H(+). The enzyme catalyses L-aspartyl-tRNA(Asn) + L-glutamine + ATP + H2O = L-asparaginyl-tRNA(Asn) + L-glutamate + ADP + phosphate + 2 H(+). Its function is as follows. Allows the formation of correctly charged Asn-tRNA(Asn) or Gln-tRNA(Gln) through the transamidation of misacylated Asp-tRNA(Asn) or Glu-tRNA(Gln) in organisms which lack either or both of asparaginyl-tRNA or glutaminyl-tRNA synthetases. The reaction takes place in the presence of glutamine and ATP through an activated phospho-Asp-tRNA(Asn) or phospho-Glu-tRNA(Gln). In Pseudothermotoga lettingae (strain ATCC BAA-301 / DSM 14385 / NBRC 107922 / TMO) (Thermotoga lettingae), this protein is Aspartyl/glutamyl-tRNA(Asn/Gln) amidotransferase subunit B.